The chain runs to 754 residues: 5-methyltetrahydropteroyltriglutamate--homocysteine methyltransferase (754 aa).

Residues 17–20 (RELK) and Lys-117 contribute to the 5-methyltetrahydropteroyltri-L-glutamate site. L-homocysteine is bound by residues 431–433 (IGS) and Glu-484. L-methionine-binding positions include 431–433 (IGS) and Glu-484. 5-methyltetrahydropteroyltri-L-glutamate contacts are provided by residues 515 to 516 (RC) and Trp-561. Position 599 (Asp-599) interacts with L-homocysteine. Asp-599 provides a ligand contact to L-methionine. 5-methyltetrahydropteroyltri-L-glutamate is bound at residue Glu-605. Positions 641, 643, and 665 each coordinate Zn(2+). His-694 acts as the Proton donor in catalysis. Cys-726 serves as a coordination point for Zn(2+).

Belongs to the vitamin-B12 independent methionine synthase family. The cofactor is Zn(2+).

The catalysed reaction is 5-methyltetrahydropteroyltri-L-glutamate + L-homocysteine = tetrahydropteroyltri-L-glutamate + L-methionine. It functions in the pathway amino-acid biosynthesis; L-methionine biosynthesis via de novo pathway; L-methionine from L-homocysteine (MetE route): step 1/1. In terms of biological role, catalyzes the transfer of a methyl group from 5-methyltetrahydrofolate to homocysteine resulting in methionine formation. This Salmonella enteritidis PT4 (strain P125109) protein is 5-methyltetrahydropteroyltriglutamate--homocysteine methyltransferase.